The chain runs to 489 residues: PAT complex subunit CCDC47 (489 aa).

The N-terminal stretch at 1-20 is a signal peptide; sequence MILFTRLLAVSLLLVSGAFA. The Cytoplasmic segment spans residues 21–141; that stretch reads KFQEFDDSDD…PAHLQNSWES (121 aa). Acidic residues-rich tracts occupy residues 33-47 and 62-103; these read EYDDNDFAEFEDAAD and KEDE…EPYD. Positions 33 to 103 are disordered; sequence EYDDNDFAEF…EGDADAEPYD (71 aa). Residues 142–162 form a helical membrane-spanning segment; that stretch reads YYMEILMVTGLLAYIMNYIIG. The Lumenal segment spans residues 163 to 489; sequence KNKNSRLAQA…KMKQIKVKAM (327 aa). A coiled-coil region spans residues 428-489; sequence HVQRQEAAQT…KMKQIKVKAM (62 aa). The disordered stretch occupies residues 430 to 489; sequence QRQEAAQTRREEKKRAEKERIMNEEDPEKQRRLEEAAQRREQKKIEKKQMKMKQIKVKAM. Basic and acidic residues predominate over residues 436–478; sequence QTRREEKKRAEKERIMNEEDPEKQRRLEEAAQRREQKKIEKKQ. Residues 479 to 489 show a composition bias toward basic residues; it reads MKMKQIKVKAM.

It belongs to the CCDC47 family. In terms of assembly, component of the multi-pass translocon (MPT) complex.

The protein resides in the endoplasmic reticulum membrane. It is found in the rough endoplasmic reticulum membrane. Functionally, component of the multi-pass translocon (MPT) complex that mediates insertion of multi-pass membrane proteins into the lipid bilayer of membranes. The MPT complex takes over after the SEC61 complex: following membrane insertion of the first few transmembrane segments of proteins by the SEC61 complex, the MPT complex occludes the lateral gate of the SEC61 complex to promote insertion of subsequent transmembrane regions. The polypeptide is PAT complex subunit CCDC47 (ccdc47) (Xenopus laevis (African clawed frog)).